A 188-amino-acid chain; its full sequence is Putative manganese efflux pump MntP (188 aa).

6 helical membrane-spanning segments follow: residues 3–23 (LYAL…VALA), 35–55 (IAAT…AGWV), 63–83 (FISE…GLKM), 104–126 (WMTV…GLAF), 140–160 (MAAT…GVLF), and 167–187 (AGGL…LGLI).

It belongs to the MntP (TC 9.B.29) family.

The protein resides in the cell inner membrane. Probably functions as a manganese efflux pump. The chain is Putative manganese efflux pump MntP from Neisseria gonorrhoeae (strain ATCC 700825 / FA 1090).